Consider the following 89-residue polypeptide: Small ribosomal subunit protein uS15 (89 aa).

This sequence belongs to the universal ribosomal protein uS15 family. Part of the 30S ribosomal subunit. Forms a bridge to the 50S subunit in the 70S ribosome, contacting the 23S rRNA.

In terms of biological role, one of the primary rRNA binding proteins, it binds directly to 16S rRNA where it helps nucleate assembly of the platform of the 30S subunit by binding and bridging several RNA helices of the 16S rRNA. Forms an intersubunit bridge (bridge B4) with the 23S rRNA of the 50S subunit in the ribosome. The sequence is that of Small ribosomal subunit protein uS15 from Desulfotalea psychrophila (strain LSv54 / DSM 12343).